An 865-amino-acid polypeptide reads, in one-letter code: Outer membrane usher protein HtrE (865 aa).

The signal sequence occupies residues 1–29; sequence MTIEYTKNYHHLTRIATFCALLYCNTAFS. Cys838 and Cys862 form a disulfide bridge.

It belongs to the fimbrial export usher family.

The protein resides in the cell outer membrane. In terms of biological role, part of the yadCKLM-htrE-yadVN fimbrial operon. Could contribute to adhesion to various surfaces in specific environmental niches. Probably involved in the export and assembly of fimbrial subunits across the outer membrane. The protein is Outer membrane usher protein HtrE (htrE) of Escherichia coli (strain K12).